The chain runs to 113 residues: Nucleoid-associated protein Synpcc7942_0464 (113 aa).

This sequence belongs to the YbaB/EbfC family. Homodimer.

It is found in the cytoplasm. Its subcellular location is the nucleoid. Functionally, binds to DNA and alters its conformation. May be involved in regulation of gene expression, nucleoid organization and DNA protection. This is Nucleoid-associated protein Synpcc7942_0464 from Synechococcus elongatus (strain ATCC 33912 / PCC 7942 / FACHB-805) (Anacystis nidulans R2).